The following is a 290-amino-acid chain: Manganese efflux system protein MneS (290 aa).

6 helical membrane passes run 15–35 (LVSIAAYLVLSAIKLIIGYLF), 39–61 (ALTADGLNNTTDIIASVAVLIGL), 82–102 (IASLIASFIMMVVGLQVLFSA), 113–133 (TPDMIAAWTAAGGAVLMLIVY), 159–179 (AFVSIGTFIGIVAAQFHLAWI), and 181–201 (TVTAFVIGLLICKTAWDIFKE).

The protein belongs to the cation diffusion facilitator (CDF) transporter (TC 2.A.4) family.

Its subcellular location is the cell membrane. Functionally, secondary manganese efflux system. May prevent manganese intoxication. In Bacillus subtilis (strain 168), this protein is Manganese efflux system protein MneS.